The chain runs to 225 residues: Cytochrome c oxidase subunit 2 (225 aa).

Residues 1–25 (MSTWMMFMFQESNSLYADNLVSFHN) lie on the Mitochondrial intermembrane side of the membrane. Residues 26–47 (MVMIIVIMISTLTVYIIFDLFL) traverse the membrane as a helical segment. At 48-62 (NKFSNLYLLKNHNIE) the chain is on the mitochondrial matrix side. Residues 63-82 (IIWMIVPIVILLIICFPSLK) form a helical membrane-spanning segment. Residues 83–225 (ILYLIDEIVN…YFMNWIYKMN (143 aa)) lie on the Mitochondrial intermembrane side of the membrane. The Cu cation site is built by H159, C194, E196, C198, H202, and M205. Mg(2+) is bound at residue E196.

This sequence belongs to the cytochrome c oxidase subunit 2 family. Component of the cytochrome c oxidase (complex IV, CIV), a multisubunit enzyme composed of a catalytic core of 3 subunits and several supernumerary subunits. The complex exists as a monomer or a dimer and forms supercomplexes (SCs) in the inner mitochondrial membrane with ubiquinol-cytochrome c oxidoreductase (cytochrome b-c1 complex, complex III, CIII). Cu cation is required as a cofactor.

It localises to the mitochondrion inner membrane. The enzyme catalyses 4 Fe(II)-[cytochrome c] + O2 + 8 H(+)(in) = 4 Fe(III)-[cytochrome c] + 2 H2O + 4 H(+)(out). In terms of biological role, component of the cytochrome c oxidase, the last enzyme in the mitochondrial electron transport chain which drives oxidative phosphorylation. The respiratory chain contains 3 multisubunit complexes succinate dehydrogenase (complex II, CII), ubiquinol-cytochrome c oxidoreductase (cytochrome b-c1 complex, complex III, CIII) and cytochrome c oxidase (complex IV, CIV), that cooperate to transfer electrons derived from NADH and succinate to molecular oxygen, creating an electrochemical gradient over the inner membrane that drives transmembrane transport and the ATP synthase. Cytochrome c oxidase is the component of the respiratory chain that catalyzes the reduction of oxygen to water. Electrons originating from reduced cytochrome c in the intermembrane space (IMS) are transferred via the dinuclear copper A center (CU(A)) of subunit 2 and heme A of subunit 1 to the active site in subunit 1, a binuclear center (BNC) formed by heme A3 and copper B (CU(B)). The BNC reduces molecular oxygen to 2 water molecules using 4 electrons from cytochrome c in the IMS and 4 protons from the mitochondrial matrix. The polypeptide is Cytochrome c oxidase subunit 2 (COII) (Apis florea (Dwarf honeybee)).